Reading from the N-terminus, the 897-residue chain is High molecular weight rhoptry protein 3 (897 aa).

A signal peptide spans 1–24; it reads MRSKHLVTLFIITFLSFSTVKVWG. 5 cysteine pairs are disulfide-bonded: C157/C231, C244/C253, C262/C276, C421/C620, and C475/C536. The helical transmembrane segment at 597-615 threads the bilayer; the sequence is FVLYFISIISVLYINEYYY. Disordered regions lie at residues 788-845 and 859-897; these read KEQS…SNLK and QLDKEKPKKKKSKRKKKRDSSSDRILLEESKTFTSENEL. A compositionally biased stretch (polar residues) spans 792–801; it reads KSTSAASTSD. The span at 802–817 shows a compositional bias: low complexity; that stretch reads ELSGSEGPSTESTSTG. The residue at position 804 (S804) is a Phosphoserine. The span at 820 to 832 shows a compositional bias: basic and acidic residues; it reads GEDKTTDNTYKEM. The span at 865 to 876 shows a compositional bias: basic residues; the sequence is PKKKKSKRKKKR. The segment covering 877-889 has biased composition (basic and acidic residues); the sequence is DSSSDRILLEESK.

Component of the RhopH complex, composed of CLAG3.1/CLAG3.2, RhopH2 and RhopH3 with a 1:1:1 subunit stoichiometry. Interacts with CLAG3.1/CLAG3.2. Interacts with CDPK1; the interaction promotes RhopH3 phosphorylation in merozoites. In terms of processing, proteolytically cleaved near C-terminus.

The protein resides in the host cell membrane. The protein localises to the parasitophorous vacuole membrane. Its subcellular location is the cytoplasmic vesicle. It localises to the secretory vesicle. It is found in the rhoptry. In terms of biological role, participates in the formation of new permeability pathways in Plasmodium-infected erythrocytes enabling the uptake of nutrients from the blood plasma. Required for maintaining invasion capacity of merozoites. Required for the trophozoite to schizont developmental transition of the intracellular parasite. The sequence is that of High molecular weight rhoptry protein 3 from Plasmodium falciparum.